Reading from the N-terminus, the 845-residue chain is Envelope glycoprotein B (845 aa).

The first 41 residues, 1–41 (MSFTDQTYTRSCMHTCITRDHRLYGIVIISLLLLLDNSVFC), serve as a signal peptide directing secretion. The Virion surface segment spans residues 42–727 (QNENKVIDIK…SGVASFLQNP (686 aa)). Intrachain disulfides connect cysteine 62–cysteine 523, cysteine 80–cysteine 479, cysteine 153–cysteine 218, cysteine 310–cysteine 358, and cysteine 552–cysteine 591. The segment at 120–126 (RYADVFS) is involved in fusion and/or binding to host membrane. A glycan (N-linked (GlcNAc...) asparagine; by host) is linked at asparagine 175. Positions 204–212 (LPGTWLRKT) are involved in fusion and/or binding to host membrane. Residues asparagine 328, asparagine 388, asparagine 414, asparagine 420, asparagine 425, asparagine 564, and asparagine 632 are each glycosylated (N-linked (GlcNAc...) asparagine; by host). The interval 677–725 (LEQAIVTKPYVPPAGMQQALQGLSGVGSVITGTLGAMQSLVSGVASFLQ) is hydrophobic membrane proximal region. A helical membrane pass occupies residues 728 to 748 (FGGTLSIILIGCIIVGVIIIY). Residues 749–845 (NRMNQSRGSP…GYTTLSSMNI (97 aa)) are Intravirion-facing. Residues 837–840 (YTTL) carry the Internalization motif motif.

Belongs to the herpesviridae glycoprotein B family. Homotrimer; disulfide-linked. Binds to heparan sulfate proteoglycans. Interacts with gH/gL heterodimer. In terms of processing, a proteolytic cleavage by host furin generates two subunits that remain linked by disulfide bonds.

The protein resides in the virion membrane. It localises to the host cell membrane. The protein localises to the host endosome membrane. It is found in the host Golgi apparatus membrane. Its function is as follows. Envelope glycoprotein that forms spikes at the surface of virion envelope. Essential for the initial attachment to heparan sulfate moieties of the host cell surface proteoglycans. Involved in fusion of viral and cellular membranes leading to virus entry into the host cell. Following initial binding to its host receptors, membrane fusion is mediated by the fusion machinery composed at least of gB and the heterodimer gH/gL. May be involved in the fusion between the virion envelope and the outer nuclear membrane during virion egress. This chain is Envelope glycoprotein B, found in Elephas maximus (Indian elephant).